We begin with the raw amino-acid sequence, 546 residues long: Beta-amylase (546 aa).

The first 30 residues, 1 to 30 (MKNQFQYCCIVILSVVMLFVSLLIPQASSA), serve as a signal peptide directing secretion. D79 serves as a coordination point for substrate. Ca(2+)-binding residues include E86, D90, and Q91. 2 residues coordinate substrate: H119 and D127. A disulfide bond links C121 and C129. Ca(2+) contacts are provided by E171 and E174. E202 functions as the Proton donor in the catalytic mechanism. Substrate is bound by residues K317, H322, and T360. Catalysis depends on E397, which acts as the Proton acceptor. Residues 398-399 (NA) and R427 each bind substrate. Positions 444-546 (LLGVTPVMQT…LKTTSHTSSW (103 aa)) constitute a CBM20 domain.

It belongs to the glycosyl hydrolase 14 family. As to quaternary structure, monomer. It depends on Ca(2+) as a cofactor.

It carries out the reaction Hydrolysis of (1-&gt;4)-alpha-D-glucosidic linkages in polysaccharides so as to remove successive maltose units from the non-reducing ends of the chains.. This Bacillus cereus protein is Beta-amylase (spoII).